The chain runs to 212 residues: General odorant-binding protein 68 (212 aa).

Residues 1 to 28 form the signal peptide; the sequence is MATTIARIGSANWAKLLVLLWLVQLATA. 3 disulfide bridges follow: cysteine 64–cysteine 85, cysteine 80–cysteine 152, and cysteine 130–cysteine 162.

This sequence belongs to the PBP/GOBP family.

It localises to the secreted. Functionally, present in the aqueous fluid surrounding olfactory sensory dendrites and are thought to aid in the capture and transport of hydrophobic odorants into and through this fluid. In Anopheles gambiae (African malaria mosquito), this protein is General odorant-binding protein 68 (Obp68).